A 544-amino-acid polypeptide reads, in one-letter code: Chaperonin GroEL 2 (544 aa).

Residues 29-32, 86-90, Gly-413, 479-481, and Asp-495 each bind ATP; these read TLGP, DGTTT, and NAA.

It belongs to the chaperonin (HSP60) family. Forms a cylinder of 14 subunits composed of two heptameric rings stacked back-to-back. Interacts with the co-chaperonin GroES.

The protein resides in the cytoplasm. It carries out the reaction ATP + H2O + a folded polypeptide = ADP + phosphate + an unfolded polypeptide.. Together with its co-chaperonin GroES, plays an essential role in assisting protein folding. The GroEL-GroES system forms a nano-cage that allows encapsulation of the non-native substrate proteins and provides a physical environment optimized to promote and accelerate protein folding. This Prochlorococcus marinus subsp. pastoris (strain CCMP1986 / NIES-2087 / MED4) protein is Chaperonin GroEL 2.